The primary structure comprises 435 residues: Serine carboxypeptidase-like 12 (435 aa).

A signal peptide spans 1–21 (MKSTPKLLLLLLFIINHHVDS). 3 cysteine pairs are disulfide-bonded: cysteine 80–cysteine 323, cysteine 244–cysteine 258, and cysteine 282–cysteine 289. A glycan (N-linked (GlcNAc...) asparagine) is linked at asparagine 101. Residue serine 176 is part of the active site. Asparagine 313, asparagine 336, and asparagine 344 each carry an N-linked (GlcNAc...) asparagine glycan. The active site involves aspartate 360. Asparagine 376 carries N-linked (GlcNAc...) asparagine glycosylation. Residue histidine 413 is part of the active site. Asparagine 420 carries an N-linked (GlcNAc...) asparagine glycan.

Belongs to the peptidase S10 family. In terms of tissue distribution, expressed in roots.

The protein localises to the secreted. In terms of biological role, probable carboxypeptidase. In Arabidopsis thaliana (Mouse-ear cress), this protein is Serine carboxypeptidase-like 12 (SCPL12).